The following is a 384-amino-acid chain: MTALSTNSSSGGIFKIAIVGAGGINFGTPEGPWNNAQRVEKVLGKSLRVTALINPLINESERVLKSKCASDVAFAYENTKTYVSVTEYLEYLDSHPEDVPSAYLIGIPPDFHGCTTPGMDMELEILRKYPNAALFIEKPITSAPVQGAFNLVHELEKYHAIISIGYMFRYLKIVQAAKKYVADNNLNIACTIARYNSAYEHNNKLFWWYMSKSGGPVVEQATHFCDLSIYFGGDVDTSTVKVNRVNWYDPCGKLAKVPVDEESIPKEERIPRFTAASWKYKSGAVGILAHSIILQGTNYDTCLELQADGHYVRMVDFYGQPRLYIRSPEADSERIINFPEDDPYYNEFDAFLGVVQGRYPPSRILSKFDDGAKTYELTKIITNN.

It to S.pombe SpAC2E11.17.

This is an uncharacterized protein from Schizosaccharomyces pombe (strain 972 / ATCC 24843) (Fission yeast).